Here is a 205-residue protein sequence, read N- to C-terminus: N-(5'-phosphoribosyl)anthranilate isomerase (205 aa).

This sequence belongs to the TrpF family.

The enzyme catalyses N-(5-phospho-beta-D-ribosyl)anthranilate = 1-(2-carboxyphenylamino)-1-deoxy-D-ribulose 5-phosphate. The protein operates within amino-acid biosynthesis; L-tryptophan biosynthesis; L-tryptophan from chorismate: step 3/5. In Thermotoga petrophila (strain ATCC BAA-488 / DSM 13995 / JCM 10881 / RKU-1), this protein is N-(5'-phosphoribosyl)anthranilate isomerase.